Reading from the N-terminus, the 613-residue chain is UvrABC system protein C (613 aa).

In terms of domain architecture, GIY-YIG spans 13-92 (DKSGVYIMKD…IKKYKPKYNI (80 aa)). The UVR domain maps to 204–239 (DEIINDLRIQMETAAEQLDFEKAAQLRNKITSIKQL).

This sequence belongs to the UvrC family. As to quaternary structure, interacts with UvrB in an incision complex.

It is found in the cytoplasm. In terms of biological role, the UvrABC repair system catalyzes the recognition and processing of DNA lesions. UvrC both incises the 5' and 3' sides of the lesion. The N-terminal half is responsible for the 3' incision and the C-terminal half is responsible for the 5' incision. The chain is UvrABC system protein C from Ruminiclostridium cellulolyticum (strain ATCC 35319 / DSM 5812 / JCM 6584 / H10) (Clostridium cellulolyticum).